Consider the following 357-residue polypeptide: UDP-N-acetylglucosamine--N-acetylmuramyl-(pentapeptide) pyrophosphoryl-undecaprenol N-acetylglucosamine transferase (357 aa).

UDP-N-acetyl-alpha-D-glucosamine is bound by residues 10-12, Asn-124, Ser-189, Ile-244, and Gln-289; that span reads TGG.

It belongs to the glycosyltransferase 28 family. MurG subfamily.

It localises to the cell membrane. It catalyses the reaction Mur2Ac(oyl-L-Ala-gamma-D-Glu-L-Lys-D-Ala-D-Ala)-di-trans,octa-cis-undecaprenyl diphosphate + UDP-N-acetyl-alpha-D-glucosamine = beta-D-GlcNAc-(1-&gt;4)-Mur2Ac(oyl-L-Ala-gamma-D-Glu-L-Lys-D-Ala-D-Ala)-di-trans,octa-cis-undecaprenyl diphosphate + UDP + H(+). The protein operates within cell wall biogenesis; peptidoglycan biosynthesis. In terms of biological role, cell wall formation. Catalyzes the transfer of a GlcNAc subunit on undecaprenyl-pyrophosphoryl-MurNAc-pentapeptide (lipid intermediate I) to form undecaprenyl-pyrophosphoryl-MurNAc-(pentapeptide)GlcNAc (lipid intermediate II). The protein is UDP-N-acetylglucosamine--N-acetylmuramyl-(pentapeptide) pyrophosphoryl-undecaprenol N-acetylglucosamine transferase of Lactococcus lactis subsp. lactis (strain IL1403) (Streptococcus lactis).